Here is a 393-residue protein sequence, read N- to C-terminus: MTCSTSLSGKNRIVLIAGILMIATTLRVTFTGAAPLLDTIRSAYSLTTAQTGLLTTLPLLAFALISPLAAPVARRFGMERSLFAALLLICAGIAIRSLPSPYLLFGGTAVIGGGIALGNVLLPGLIKRDFPHSVARLTGAYSLTMGAAAALGSAMVVPLALNGFGWQGALLMLMCFPLLALFLWLPQWRSQQHANLSTSRALHTRGIWRSPLAWQVTLFLGINSLVYYVIIGWLPAILISHGYSEAQAGSLHGLLQLATAAPGLLIPLFLHHVKDQRGIAAFVALMCAVGAVGLCFMPAHAITWTLLFGFGSGATMILGLTFIGLRASSAHQAAALSGMAQSVGYLLAACGPPLMGKIHDANGNWSVPLMGVAILSLLMAIFGLCAGRDKEIR.

Residues 1–12 (MTCSTSLSGKNR) are Cytoplasmic-facing. Residues 13 to 33 (IVLIAGILMIATTLRVTFTGA) traverse the membrane as a helical segment. Residues 34-52 (APLLDTIRSAYSLTTAQTG) lie on the Periplasmic side of the membrane. A helical membrane pass occupies residues 53 to 73 (LLTTLPLLAFALISPLAAPVA). Residues 74–80 (RRFGMER) lie on the Cytoplasmic side of the membrane. The next 2 helical transmembrane spans lie at 81 to 101 (SLFAALLLICAGIAIRSLPSP) and 102 to 122 (YLLFGGTAVIGGGIALGNVLL). The Cytoplasmic portion of the chain corresponds to 123–140 (PGLIKRDFPHSVARLTGA). A helical membrane pass occupies residues 141 to 161 (YSLTMGAAAALGSAMVVPLAL). Residues 162-163 (NG) lie on the Periplasmic side of the membrane. A helical transmembrane segment spans residues 164 to 184 (FGWQGALLMLMCFPLLALFLW). Residues 185-218 (LPQWRSQQHANLSTSRALHTRGIWRSPLAWQVTL) are Cytoplasmic-facing. The chain crosses the membrane as a helical span at residues 219–239 (FLGINSLVYYVIIGWLPAILI). Over 240 to 249 (SHGYSEAQAG) the chain is Periplasmic. A helical transmembrane segment spans residues 250–270 (SLHGLLQLATAAPGLLIPLFL). The Cytoplasmic portion of the chain corresponds to 271–278 (HHVKDQRG). A helical membrane pass occupies residues 279 to 299 (IAAFVALMCAVGAVGLCFMPA). The Periplasmic portion of the chain corresponds to 300–304 (HAITW). Residues 305–325 (TLLFGFGSGATMILGLTFIGL) traverse the membrane as a helical segment. Over 326 to 334 (RASSAHQAA) the chain is Cytoplasmic. Residues 335–355 (ALSGMAQSVGYLLAACGPPLM) traverse the membrane as a helical segment. Residues 356 to 366 (GKIHDANGNWS) lie on the Periplasmic side of the membrane. A helical membrane pass occupies residues 367-387 (VPLMGVAILSLLMAIFGLCAG). Topologically, residues 388-393 (RDKEIR) are cytoplasmic.

It belongs to the major facilitator superfamily. Cyanate porter (TC 2.A.1.17) family.

It localises to the cell inner membrane. Functionally, involved in efflux of 2-nitroimidazole. In Escherichia coli (strain K12), this protein is 2-nitroimidazole transporter.